We begin with the raw amino-acid sequence, 45 residues long: uncharacterized protein (45 aa).

The helical transmembrane segment at 5-25 threads the bilayer; that stretch reads IFFIFALSGILAACTVGGGVS.

The protein localises to the membrane. This is an uncharacterized protein from Haemophilus influenzae (strain ATCC 51907 / DSM 11121 / KW20 / Rd).